The primary structure comprises 122 residues: Neutral phospholipase A2 agkistrodotoxin (122 aa).

7 cysteine pairs are disulfide-bonded: C26/C115, C28/C44, C43/C95, C49/C122, C50/C88, C57/C81, and C75/C86. Ca(2+)-binding residues include Y27, G29, and G31. H47 is a catalytic residue. D48 lines the Ca(2+) pocket. D89 is a catalytic residue.

Ca(2+) serves as cofactor. In terms of tissue distribution, expressed by the venom gland.

The protein resides in the secreted. It carries out the reaction a 1,2-diacyl-sn-glycero-3-phosphocholine + H2O = a 1-acyl-sn-glycero-3-phosphocholine + a fatty acid + H(+). Snake venom phospholipase A2 (PLA2) that inhibits neuromuscular transmission by blocking acetylcholine release from the nerve termini. PLA2 catalyzes the calcium-dependent hydrolysis of the 2-acyl groups in 3-sn-phosphoglycerides. The chain is Neutral phospholipase A2 agkistrodotoxin from Gloydius halys (Chinese water mocassin).